Consider the following 513-residue polypeptide: uncharacterized protein (513 aa).

The TRAM domain occupies 3–61; the sequence is NLKIGQKLQLEIERMGINGEGIGVISGRLVFIPYALPGEEVLVEITENARNFSRAKLVK. The S-adenosyl-L-methionine site is built by glutamine 309, tyrosine 338, aspartate 359, and aspartate 407. Cysteine 434 (nucleophile) is an active-site residue.

Belongs to the class I-like SAM-binding methyltransferase superfamily. RNA M5U methyltransferase family.

This is an uncharacterized protein from Lactococcus lactis subsp. lactis (strain IL1403) (Streptococcus lactis).